Here is a 166-residue protein sequence, read N- to C-terminus: 2-C-methyl-D-erythritol 2,4-cyclodiphosphate synthase (166 aa).

2 residues coordinate a divalent metal cation: D12 and H14. Residues 12 to 14 and 38 to 39 contribute to the 4-CDP-2-C-methyl-D-erythritol 2-phosphate site; these read DSH and HS. H46 contributes to the a divalent metal cation binding site. 4-CDP-2-C-methyl-D-erythritol 2-phosphate-binding positions include 60 to 62, 65 to 69, and R146; these read DIG and FPDTD.

It belongs to the IspF family. As to quaternary structure, homotrimer. Requires a divalent metal cation as cofactor.

It catalyses the reaction 4-CDP-2-C-methyl-D-erythritol 2-phosphate = 2-C-methyl-D-erythritol 2,4-cyclic diphosphate + CMP. It participates in isoprenoid biosynthesis; isopentenyl diphosphate biosynthesis via DXP pathway; isopentenyl diphosphate from 1-deoxy-D-xylulose 5-phosphate: step 4/6. Involved in the biosynthesis of isopentenyl diphosphate (IPP) and dimethylallyl diphosphate (DMAPP), two major building blocks of isoprenoid compounds. Catalyzes the conversion of 4-diphosphocytidyl-2-C-methyl-D-erythritol 2-phosphate (CDP-ME2P) to 2-C-methyl-D-erythritol 2,4-cyclodiphosphate (ME-CPP) with a corresponding release of cytidine 5-monophosphate (CMP). In Gemmatimonas aurantiaca (strain DSM 14586 / JCM 11422 / NBRC 100505 / T-27), this protein is 2-C-methyl-D-erythritol 2,4-cyclodiphosphate synthase.